A 204-amino-acid chain; its full sequence is Probable GTP-binding protein EngB (204 aa).

The EngB-type G domain occupies 27 to 201; it reads SGIEIAFAGR…SEKLDQWFSP (175 aa). GTP is bound by residues 35 to 42, 62 to 66, 80 to 83, 147 to 150, and 180 to 182; these read GRSNAGKS, GRTQL, DLPG, TKAD, and FSA. Positions 42 and 64 each coordinate Mg(2+).

Belongs to the TRAFAC class TrmE-Era-EngA-EngB-Septin-like GTPase superfamily. EngB GTPase family. Requires Mg(2+) as cofactor.

In terms of biological role, necessary for normal cell division and for the maintenance of normal septation. This chain is Probable GTP-binding protein EngB, found in Histophilus somni (strain 129Pt) (Haemophilus somnus).